Reading from the N-terminus, the 328-residue chain is Protein-glutamine deamidase Cif (328 aa).

The interval 1 to 68 (MLEHGVMKIP…TNRTGENPMI (68 aa)) is disordered. The segment covering 52 to 63 (RSSSISNTNRTG) has biased composition (polar residues). Catalysis depends on residues Cys-156, His-211, and Gln-231.

It belongs to the Cif family.

The protein resides in the secreted. It localises to the host nucleus. It carries out the reaction L-glutaminyl-[protein] + H2O = L-glutamyl-[protein] + NH4(+). In terms of biological role, protein-glutamine deamidase effector that inhibits the host cell cycle and other key cellular processes such as the actin network and programmed-cell death. Acts by mediating the side chain deamidation of 'Gln-40' of host NEDD8, converting it to glutamate, thereby abolishing the activity of cullin-RING-based E3 ubiquitin-protein ligase complexes (CRL complexes). Inactivation of CRL complexes prevents ubiquitination and subsequent degradation of the cyclin-dependent kinase inhibitors CDKN1A/p21 and CDKN1B/p27, leading to G1 and G2 cell cycle arrests in host cells. Deamidation of 'Gln-40' of host NEDD8 also triggers macrophage-specific programmed cell death. Also able to catalyze deamidation of 'Gln-40' of host ubiquitin in vitro; however, NEDD8 constitutes the preferred substrate in vivo. Also regulates the host NF-kappa-B signaling via activation of MAPK/ERK cascade: activation of host MAPK/ERK cascade is independent of CRL complexes inhibition, suggesting that Cif has other host protein targets than NEDD8. The polypeptide is Protein-glutamine deamidase Cif (Burkholderia pseudomallei (strain K96243)).